A 305-amino-acid polypeptide reads, in one-letter code: Glutaminase (305 aa).

Substrate is bound by residues Ser-61, Asn-113, Glu-158, Asn-165, Tyr-189, Tyr-241, and Val-259.

The protein belongs to the glutaminase family. In terms of assembly, homotetramer.

The enzyme catalyses L-glutamine + H2O = L-glutamate + NH4(+). The polypeptide is Glutaminase (Alkaliphilus oremlandii (strain OhILAs) (Clostridium oremlandii (strain OhILAs))).